The primary structure comprises 296 residues: Transposase for insertion sequence element IS629 (296 aa).

The region spanning 125–285 (VAERPDQLWV…TPPAEAEKAY (161 aa)) is the Integrase catalytic domain.

Functionally, involved in the transposition of the insertion sequence. The chain is Transposase for insertion sequence element IS629 from Shigella sonnei.